A 220-amino-acid polypeptide reads, in one-letter code: Adenylate kinase (220 aa).

Residue 10 to 15 (GAGKGT) participates in ATP binding. The NMP stretch occupies residues 30-59 (STGDMLRAAVKAGTPLGVEAKTYMDEGKLV). AMP is bound by residues T31, R36, 57–59 (KLV), 85–88 (GFPR), and Q92. The segment at 122–159 (GRRTHPASGRTYHVKFNPPKVEGKDDVTGEPLVQRDDD) is LID. Residues R123 and 132–133 (TY) each bind ATP. The AMP site is built by R156 and R167. Position 206 (G206) interacts with ATP.

This sequence belongs to the adenylate kinase family. Monomer.

The protein resides in the cytoplasm. It catalyses the reaction AMP + ATP = 2 ADP. It participates in purine metabolism; AMP biosynthesis via salvage pathway; AMP from ADP: step 1/1. Functionally, catalyzes the reversible transfer of the terminal phosphate group between ATP and AMP. Plays an important role in cellular energy homeostasis and in adenine nucleotide metabolism. The polypeptide is Adenylate kinase (Burkholderia mallei (strain NCTC 10247)).